The chain runs to 3919 residues: Intermembrane lipid transfer protein Vps13D (3919 aa).

The Chorein N-terminal domain maps to 4 to 114 (DLITWVLNTY…QDLEYKLAVL (111 aa)). The tract at residues 706–736 (TSDDDETYLTPCSTPPASEKSGSESPTLLEN) is disordered. A UBA domain is found at 2292-2334 (KADSDLEKAAPLVAMGFEISDCLYAMQINNWRINDAAIWLSQQ). The 277-residue stretch at 2837–3113 (ELYISAPVWI…YVMDDPLGQQ (277 aa)) folds into the SHR-BD domain. The tract at residues 3749 to 3768 (VRETSRDSHRNAPERKRLPR) is disordered. Positions 3751–3764 (ETSRDSHRNAPERK) are enriched in basic and acidic residues.

The protein belongs to the VPS13 family. Expressed in intestinal cells (at protein level).

It localises to the cytoplasm. The protein localises to the lysosome. Its function is as follows. Mediates the transfer of lipids between membranes at organelle contact sites. Functions in promoting mitochondrial clearance by mitochondrial autophagy (mitophagy), also possibly by positively regulating mitochondrial fission. Mitophagy plays an important role in regulating cell health and mitochondrial size and homeostasis. This chain is Intermembrane lipid transfer protein Vps13D, found in Drosophila melanogaster (Fruit fly).